We begin with the raw amino-acid sequence, 188 residues long: Protein-L-isoaspartate O-methyltransferase (188 aa).

Ser-33 is a catalytic residue.

Belongs to the methyltransferase superfamily. L-isoaspartyl/D-aspartyl protein methyltransferase family.

Its subcellular location is the cytoplasm. The enzyme catalyses [protein]-L-isoaspartate + S-adenosyl-L-methionine = [protein]-L-isoaspartate alpha-methyl ester + S-adenosyl-L-homocysteine. Catalyzes the methyl esterification of L-isoaspartyl residues in peptides and proteins that result from spontaneous decomposition of normal L-aspartyl and L-asparaginyl residues. It plays a role in the repair and/or degradation of damaged proteins. In Methanocella arvoryzae (strain DSM 22066 / NBRC 105507 / MRE50), this protein is Protein-L-isoaspartate O-methyltransferase.